Consider the following 187-residue polypeptide: Elongation factor P (187 aa).

Belongs to the elongation factor P family.

Its subcellular location is the cytoplasm. Its pathway is protein biosynthesis; polypeptide chain elongation. Involved in peptide bond synthesis. Stimulates efficient translation and peptide-bond synthesis on native or reconstituted 70S ribosomes in vitro. Probably functions indirectly by altering the affinity of the ribosome for aminoacyl-tRNA, thus increasing their reactivity as acceptors for peptidyl transferase. This is Elongation factor P from Azobacteroides pseudotrichonymphae genomovar. CFP2.